Here is a 946-residue protein sequence, read N- to C-terminus: Calcium-transporting ATPase type 2C member 2 (946 aa).

At 1-106 the chain is on the cytoplasmic side; the sequence is MVEGRVSEFL…DNSEPVWKKY (106 aa). Positions 71–95 are interaction with ORAI1; that stretch reads VDLHTGLSEFSVTQRRLAHGWNEFV. The chain crosses the membrane as a helical span at residues 107–127; sequence LDQFKNPLILLLLGSALVSVL. Topologically, residues 128 to 129 are extracellular; the sequence is TK. A helical transmembrane segment spans residues 130–150; that stretch reads EYEDAVSIATAVLVVVTVAFI. The Cytoplasmic portion of the chain corresponds to 151 to 231; sequence QEYRSEKSLE…EAEPCSKTDS (81 aa). A helical membrane pass occupies residues 232 to 252; the sequence is PLTGGGDLTTLSNIVFMGTLV. Topologically, residues 253–293 are extracellular; that stretch reads QYGRGQGVVIGTGESSQFGEVFKMMQAEETPKTPLQKSMDR. A Phosphothreonine modification is found at T264. 2 positions are modified to phosphoserine: S267 and S268. The helical transmembrane segment at 294–314 threads the bilayer; it reads LGKQLTLFSFGIIGLIMLIGW. The Cytoplasmic segment spans residues 315–331; sequence SQGKQLLSMFTIGVSLA. V332, A333, I335, and E337 together coordinate Ca(2+). A helical membrane pass occupies residues 332–352; the sequence is VAAIPEGLPIVVMVTLVLGVL. At 353-750 the chain is on the extracellular side; it reads RMAKKRVIVK…ISALSLITLS (398 aa). D379 acts as the 4-aspartylphosphate intermediate in catalysis. Residues D674 and D678 each contribute to the Mg(2+) site. Residues 751–771 traverse the membrane as a helical segment; that stretch reads TVFNLPSPLNAMQILWINIIM. N768 and D772 together coordinate Ca(2+). At 772-804 the chain is on the cytoplasmic side; the sequence is DGPPAQSLGVEPVDKDAFRQPPRSVRDTILSRA. Residues 805–825 form a helical membrane-spanning segment; the sequence is LILKILMSAAIIISGTLFIFW. At 826 to 837 the chain is on the extracellular side; sequence KEMPEDRASTPR. The helical transmembrane segment at 838-855 threads the bilayer; sequence TTTMTFTCFVFFDLFNAL. The Cytoplasmic portion of the chain corresponds to 856 to 874; sequence TCRSQTKLIFEIGFLRNHM. A helical membrane pass occupies residues 875–895; sequence FLYSVLGSILGQLAVIYIPPL. Topologically, residues 896–905 are extracellular; it reads QRVFQTENLG. Residues 906–926 traverse the membrane as a helical segment; the sequence is ALDLLFLTGLASSVFILSELL. The Cytoplasmic segment spans residues 927 to 946; sequence KLCEKYCCSPKRVQMHPEDV.

Belongs to the cation transport ATPase (P-type) (TC 3.A.3) family. Type IIA subfamily. Interacts (via N-terminus) with ORAI1 (via N- and C-termini); this interaction regulates Ca(2+) influx at the plasma membrane. In terms of tissue distribution, highly expressed in the gastrointestinal and respiratory tracts, prostate, thyroid, salivary, and mammary glands. Expressed in colon epithelial cells (at protein level). Expressed in brain and testis (at protein level).

It is found in the golgi apparatus. Its subcellular location is the trans-Golgi network membrane. It localises to the cell membrane. The protein localises to the basolateral cell membrane. The catalysed reaction is Ca(2+)(in) + ATP + H2O = Ca(2+)(out) + ADP + phosphate + H(+). The enzyme catalyses Mn(2+)(in) + ATP + H2O = Mn(2+)(out) + ADP + phosphate + H(+). Its function is as follows. ATP-driven pump that supplies the Golgi apparatus with Ca(2+) and Mn(2+) ions, both essential cofactors for processing and trafficking of newly synthesized proteins in the secretory pathway. Within a catalytic cycle, acquires Ca(2+) or Mn(2+) ions on the cytoplasmic side of the membrane and delivers them to the lumenal side. The transfer of ions across the membrane is coupled to ATP hydrolysis and is associated with a transient phosphorylation that shifts the pump conformation from inward-facing to outward-facing state. Induces Ca(2+) influx independently of its ATP-driven pump function. At the basolateral membrane of mammary epithelial cells, interacts with Ca(2+) channel ORAI1 and mediates Ca(2+) entry independently of the Ca(2+) content of endoplasmic reticulum or Golgi stores. May facilitate transepithelial transport of large quantities of Ca(2+) for milk secretion via activation of Ca(2+) influx channels at the plasma membrane and active Ca(2+) transport at the Golgi apparatus. This chain is Calcium-transporting ATPase type 2C member 2, found in Homo sapiens (Human).